The chain runs to 259 residues: Probable dihydroorotate dehydrogenase B (NAD(+)), electron transfer subunit (259 aa).

Residues 1–89 (MLPLNVTITQ…RGPFGKGFTL (89 aa)) enclose the FAD-binding FR-type domain. [2Fe-2S] cluster is bound by residues cysteine 211, cysteine 216, cysteine 219, and cysteine 229.

Belongs to the PyrK family. Heterotetramer of 2 PyrK and 2 PyrD type B subunits. The cofactor is [2Fe-2S] cluster. It depends on FAD as a cofactor.

It functions in the pathway pyrimidine metabolism; UMP biosynthesis via de novo pathway; orotate from (S)-dihydroorotate (NAD(+) route): step 1/1. Its function is as follows. Responsible for channeling the electrons from the oxidation of dihydroorotate from the FMN redox center in the PyrD type B subunit to the ultimate electron acceptor NAD(+). The protein is Probable dihydroorotate dehydrogenase B (NAD(+)), electron transfer subunit of Methanosarcina acetivorans (strain ATCC 35395 / DSM 2834 / JCM 12185 / C2A).